A 957-amino-acid chain; its full sequence is ERC protein 2 (957 aa).

Residues 1 to 13 (MYGSARTISNPEG) show a composition bias toward polar residues. Residues 1–44 (MYGSARTISNPEGSPSRSPRLPRSPRLGHRRTSSGGGGGTGKTL) are disordered. A compositionally biased stretch (low complexity) spans 14–25 (SPSRSPRLPRSP). Ser-65 and Ser-666 each carry phosphoserine. The stretch at 140–917 (RQVRDSTMLD…RMKLMADNYD (778 aa)) forms a coiled coil. The segment at 760-957 (DQNKKVANLK…DQDDEEGIWA (198 aa)) is involved in binding to RIMS1. The interval 918 to 957 (DDHHHYHHHHHHHHHRSPGRSQHSNHRPSPDQDDEEGIWA) is disordered. The segment covering 922–943 (HYHHHHHHHHHRSPGRSQHSNH) has biased composition (basic residues). The span at 948–957 (DQDDEEGIWA) shows a compositional bias: acidic residues.

As to quaternary structure, interacts with BSN, ERC1, PPFIA1, PPFIA2, PPFIA3 and PPFIA4. Interacts through its C-terminus with the PDZ domain of RIMS1. Part of a complex consisting of ERC2, RIMS1 and UNC13A. In terms of tissue distribution, predominantly expressed in brain, including hippocampus, cortex, cerebellum, amygdala and olfactory bulb.

Its subcellular location is the cytoplasm. It is found in the synapse. The protein localises to the presynaptic active zone. The protein resides in the cytoskeleton. Its function is as follows. Thought to be involved in the organization of the cytomatrix at the nerve terminals active zone (CAZ) which regulates neurotransmitter release. Seems to act together with BSN. May recruit liprin-alpha proteins to the CAZ. The sequence is that of ERC protein 2 (Erc2) from Rattus norvegicus (Rat).